Consider the following 528-residue polypeptide: Inorganic phosphate transporter 1-2 (528 aa).

At 1–24 (MAGSQLNVLVKLDQAKTQWYHFMA) the chain is on the cytoplasmic side. A helical transmembrane segment spans residues 25–45 (IVIAGMGFFTDAYDLFCIALV). The Extracellular segment spans residues 46–71 (TKLLGRLYYTDITKPNPGTLPPNVSS). A helical transmembrane segment spans residues 72–92 (AVTGVALCGTLAGQLFFGWLG). Residues 93–99 (DKLGRKS) lie on the Cytoplasmic side of the membrane. Residues 100-120 (VYGFTLILMVVCSIASGLSFG) form a helical membrane-spanning segment. The Extracellular segment spans residues 121-125 (HTPKS). The helical transmembrane segment at 126-146 (VIATLCFFRFWLGFGIGGDYP) threads the bilayer. Topologically, residues 147–163 (LSATIMSEYASKKTRGA) are cytoplasmic. A helical transmembrane segment spans residues 164–184 (FIAAVFAMQGFGILFGAIVAL). Topologically, residues 185-212 (VVSAGFRHAYPAPSYAQNPAASLAPQAD) are extracellular. Residues 213–232 (YTWRLILMFGTIPAGLTYYW) traverse the membrane as a helical segment. Residues 233-296 (RMKMPETARY…RQFMKRHGMH (64 aa)) are Cytoplasmic-facing. A helical membrane pass occupies residues 297–317 (LLATTSTWFLLDIAFYSQNLF). Topologically, residues 318-348 (QKDIFSKVGWIPPAKTMNALEELYRISRAQA) are extracellular. Residues 349–369 (LIALCGTIPGYWFTVAFIDIV) traverse the membrane as a helical segment. At 370–371 (GR) the chain is on the cytoplasmic side. Residues 372–392 (FWIQIMGFFMMTVFMLALGVP) traverse the membrane as a helical segment. Topologically, residues 393–405 (YDHWTHPAHHTGF) are extracellular. Residues 406–426 (VVLYALTFFFANFGPNSTTFI) form a helical membrane-spanning segment. The Cytoplasmic segment spans residues 427–442 (VPAEIFPARLRSTCHG). Residues 443-463 (ISAASGKAGAIIGAFGFLYAA) form a helical membrane-spanning segment. Over 464-481 (QDQHNPDAGYSRGIGIRN) the chain is Extracellular. The helical transmembrane segment at 482–502 (ALFVLAGTNFLGMLMTLLVPE) threads the bilayer. Over 503–528 (SKGLSLEEMSKDNVVDETAQEAIAQA) the chain is Cytoplasmic.

The protein belongs to the major facilitator superfamily. Phosphate:H(+) symporter (TC 2.A.1.9) family. As to expression, expressed in the root stele and leaf phloem and xylem.

It is found in the membrane. Its function is as follows. Low-affinity transporter for inorganic phosphate (Pi). Involved in internal Pi transport from root to shoot. Responsible for most of the PHR2-mediated accumulation of excess shoot Pi under abundant Pi conditions, but not for PHO2-mediated accumulation of excess shoot Pi. Acts as a H(+):phosphate symporter. In Oryza sativa subsp. japonica (Rice), this protein is Inorganic phosphate transporter 1-2 (PTH1-2).